A 172-amino-acid polypeptide reads, in one-letter code: 3-hydroxydecanoyl-[acyl-carrier-protein] dehydratase (172 aa).

The active site involves histidine 71.

Belongs to the thioester dehydratase family. FabA subfamily. As to quaternary structure, homodimer.

It localises to the cytoplasm. The catalysed reaction is a (3R)-hydroxyacyl-[ACP] = a (2E)-enoyl-[ACP] + H2O. It carries out the reaction (3R)-hydroxydecanoyl-[ACP] = (2E)-decenoyl-[ACP] + H2O. The enzyme catalyses (2E)-decenoyl-[ACP] = (3Z)-decenoyl-[ACP]. The protein operates within lipid metabolism; fatty acid biosynthesis. Functionally, necessary for the introduction of cis unsaturation into fatty acids. Catalyzes the dehydration of (3R)-3-hydroxydecanoyl-ACP to E-(2)-decenoyl-ACP and then its isomerization to Z-(3)-decenoyl-ACP. Can catalyze the dehydratase reaction for beta-hydroxyacyl-ACPs with saturated chain lengths up to 16:0, being most active on intermediate chain length. The protein is 3-hydroxydecanoyl-[acyl-carrier-protein] dehydratase of Salmonella choleraesuis (strain SC-B67).